Reading from the N-terminus, the 339-residue chain is Biotin synthase (339 aa).

The Radical SAM core domain maps to 55 to 282 (NAVQLSTLLS…KAVVRLSAGR (228 aa)). C70, C74, and C77 together coordinate [4Fe-4S] cluster. 4 residues coordinate [2Fe-2S] cluster: C114, C145, C205, and R277.

The protein belongs to the radical SAM superfamily. Biotin synthase family. In terms of assembly, homodimer. The cofactor is [4Fe-4S] cluster. It depends on [2Fe-2S] cluster as a cofactor.

The enzyme catalyses (4R,5S)-dethiobiotin + (sulfur carrier)-SH + 2 reduced [2Fe-2S]-[ferredoxin] + 2 S-adenosyl-L-methionine = (sulfur carrier)-H + biotin + 2 5'-deoxyadenosine + 2 L-methionine + 2 oxidized [2Fe-2S]-[ferredoxin]. It participates in cofactor biosynthesis; biotin biosynthesis; biotin from 7,8-diaminononanoate: step 2/2. Functionally, catalyzes the conversion of dethiobiotin (DTB) to biotin by the insertion of a sulfur atom into dethiobiotin via a radical-based mechanism. In Burkholderia ambifaria (strain MC40-6), this protein is Biotin synthase.